Here is a 750-residue protein sequence, read N- to C-terminus: Photosystem I P700 chlorophyll a apoprotein A1 (750 aa).

A run of 8 helical transmembrane segments spans residues 70–93 (VFSA…FHGA), 156–179 (LYST…FHYH), 195–219 (LNHH…HVSL), 291–309 (TAHH…GHMY), 346–369 (WHAQ…HHMY), 385–411 (LSLF…IFMV), 433–455 (AIIS…LYIH), and 531–549 (FLVH…LILL). [4Fe-4S] cluster contacts are provided by Cys-573 and Cys-582. 2 helical membrane passes run 589-610 (HVFL…HFSW) and 664-686 (LSAY…MFLF). His-675 lines the chlorophyll a' pocket. Residues Met-683 and Tyr-691 each contribute to the chlorophyll a site. Trp-692 serves as a coordination point for phylloquinone. A helical transmembrane segment spans residues 724–744 (AVGVAHYLLGGIATTWAFFLA).

It belongs to the PsaA/PsaB family. The PsaA/B heterodimer binds the P700 chlorophyll special pair and subsequent electron acceptors. PSI consists of a core antenna complex that captures photons, and an electron transfer chain that converts photonic excitation into a charge separation. The eukaryotic PSI reaction center is composed of at least 11 subunits. P700 is a chlorophyll a/chlorophyll a' dimer, A0 is one or more chlorophyll a, A1 is one or both phylloquinones and FX is a shared 4Fe-4S iron-sulfur center. is required as a cofactor.

It localises to the plastid. Its subcellular location is the chloroplast thylakoid membrane. It catalyses the reaction reduced [plastocyanin] + hnu + oxidized [2Fe-2S]-[ferredoxin] = oxidized [plastocyanin] + reduced [2Fe-2S]-[ferredoxin]. PsaA and PsaB bind P700, the primary electron donor of photosystem I (PSI), as well as the electron acceptors A0, A1 and FX. PSI is a plastocyanin-ferredoxin oxidoreductase, converting photonic excitation into a charge separation, which transfers an electron from the donor P700 chlorophyll pair to the spectroscopically characterized acceptors A0, A1, FX, FA and FB in turn. Oxidized P700 is reduced on the lumenal side of the thylakoid membrane by plastocyanin. The sequence is that of Photosystem I P700 chlorophyll a apoprotein A1 from Anthoceros angustus (Hornwort).